A 320-amino-acid chain; its full sequence is Biotin synthase (320 aa).

One can recognise a Radical SAM core domain in the interval 45 to 274; it reads NDLQKASLLS…DSRIRLSAGR (230 aa). Residues C60, C64, and C67 each coordinate [4Fe-4S] cluster. Residues C105, C137, C197, and R269 each coordinate [2Fe-2S] cluster.

It belongs to the radical SAM superfamily. Biotin synthase family. As to quaternary structure, homodimer. [4Fe-4S] cluster is required as a cofactor. It depends on [2Fe-2S] cluster as a cofactor.

It carries out the reaction (4R,5S)-dethiobiotin + (sulfur carrier)-SH + 2 reduced [2Fe-2S]-[ferredoxin] + 2 S-adenosyl-L-methionine = (sulfur carrier)-H + biotin + 2 5'-deoxyadenosine + 2 L-methionine + 2 oxidized [2Fe-2S]-[ferredoxin]. It participates in cofactor biosynthesis; biotin biosynthesis; biotin from 7,8-diaminononanoate: step 2/2. In terms of biological role, catalyzes the conversion of dethiobiotin (DTB) to biotin by the insertion of a sulfur atom into dethiobiotin via a radical-based mechanism. This chain is Biotin synthase, found in Beijerinckia indica subsp. indica (strain ATCC 9039 / DSM 1715 / NCIMB 8712).